The following is a 46-amino-acid chain: Putative antitoxin VapB3 (46 aa).

This sequence belongs to the UPF0165 family.

Possibly the antitoxin component of a type II toxin-antitoxin (TA) system. Its cognate toxin is VapC3 (Potential). This Pyrococcus furiosus (strain ATCC 43587 / DSM 3638 / JCM 8422 / Vc1) protein is Putative antitoxin VapB3 (vapB3).